An 802-amino-acid chain; its full sequence is MMMDEDVEQASLMSFNDRPRAFPNMRSKTYSPLIFRIIRKLNVRVLSIILLFCFGAIFYMGASTSPIIVFVFTVCIISFLLSIYLTKWVLAKDEGPPEMVEISDAIRDGAEGFFRTQYSTISKMAILLAFVILCIYLFRSLTPQQEAAGLGRAMSAYITVAAFLLGALCSGIAGYVGMWVSVRANVRVSSAARRSAREALQIAVRAGGFSALVVVGMAVIGIAILYSTFYVWLGVGSPGSMNVTDLPLLLVGYGFGASFVALFAQLGGGIYTKGADVGADLVGKVEQGIPEDDPRNPAVIADLVGDNVGDCAARGADLFESIAAEIISAMILGGTMAKKCKIEDPSGFILFPLVVHSFDLIISSIGILSIKGTRDASVKSPVEDPMAVLQKGYSLTIILAVITFGASTRWLLYTEQAPSAWFNFALCGLVGIITAYIFVWISKYYTDYKHEPVRTLALASSTGHGTNIIAGVSLGLESTALPVLTISVAIISAYWLGNTSGLVDENGIPTGGLFGTAVATMGMLSTAAYVLTMDMFGPIADNAGGIVEMSQQPESVREITDLLDAVGNTTKATTKGFAIGSAALASFLLFSAYMDEVSAFANVSFKEVDIAIPEVFVGGLLGAMLIFLFSAWACAAVGRTAQEVVNEVRRQFIERPGIMEYKEKPDYSRCVAIVASAALREMIKPGALAIASPIVVGLVFRILGYYTGQPLLGAKVVASMLMFATVCGILMALFLNTAGGAWDNAKKYIETGALGGKGSEAHKAAVTGDTVGDPFKDTAGPSIHVLIKMLATITLVMAPVFL.

Transmembrane regions (helical) follow at residues 45 to 65 (VLSI…ASTS), 66 to 86 (PIIV…IYLT), 118 to 138 (YSTI…IYLF), 160 to 180 (VAAF…GMWV), 206 to 226 (AGGF…AILY), and 246 to 266 (LPLL…FAQL). Lys273 is a binding site for substrate. Asp276, Asp280, and Asp306 together coordinate Mg(2+). The next 5 membrane-spanning stretches (helical) occupy residues 348-368 (FILF…IGIL), 386-406 (MAVL…TFGA), 421-441 (WFNF…FVWI), 468-488 (IIAG…TISV), and 511-531 (GGLF…AYVL). The Mg(2+) site is built by Asp541 and Asn568. Transmembrane regions (helical) follow at residues 577–597 (FAIG…MDEV), 615–635 (VFVG…WACA), 686–706 (GALA…LGYY), and 716–736 (VVAS…LFLN). Mg(2+) is bound by residues Asp743 and Asp773. Lys776 serves as a coordination point for substrate. Residues 782–802 (SIHVLIKMLATITLVMAPVFL) form a helical membrane-spanning segment.

Belongs to the H(+)-translocating pyrophosphatase (TC 3.A.10) family. K(+)-insensitive subfamily. Monomer. As to expression, ubiquitous. Mostly expressed in cotyledons, roots and flowers. Especially high levels in trichomes, sepals and stamen filaments.

It is found in the golgi apparatus membrane. It catalyses the reaction diphosphate + H2O + H(+)(in) = 2 phosphate + 2 H(+)(out). Its activity is regulated as follows. Activated by Mg(+) but not by K(+). Inhibited by Ca(2+). Pyrophosphatase active in both inorganic pyrophosphate hydrolysis and H(+) translocation. In Arabidopsis thaliana (Mouse-ear cress), this protein is Pyrophosphate-energized membrane proton pump 2 (AVPL1).